A 335-amino-acid chain; its full sequence is UPF0104 membrane protein PH1989 (335 aa).

8 helical membrane passes run 4-24 (YLLI…AGIE), 34-54 (DIRF…IWAV), 62-82 (GANI…GIFL), 122-142 (ILDV…ALTI), 148-168 (LIIL…TTVF), 231-251 (LYSF…FLSL), 266-286 (ASIA…TEVV), and 304-324 (VTML…GILV).

Belongs to the UPF0104 family.

The protein localises to the cell membrane. The chain is UPF0104 membrane protein PH1989 from Pyrococcus horikoshii (strain ATCC 700860 / DSM 12428 / JCM 9974 / NBRC 100139 / OT-3).